Reading from the N-terminus, the 903-residue chain is Cell division cycle protein 48 homolog MJ1156 (903 aa).

ATP contacts are provided by residues 220 to 227 and 493 to 500; these read GPPGTGKT.

Belongs to the AAA ATPase family. CDC48 subfamily.

The chain is Cell division cycle protein 48 homolog MJ1156 from Methanocaldococcus jannaschii (strain ATCC 43067 / DSM 2661 / JAL-1 / JCM 10045 / NBRC 100440) (Methanococcus jannaschii).